Reading from the N-terminus, the 607-residue chain is Developmental gene 1062 protein (607 aa).

Disordered stretches follow at residues 62–84 (LQGQ…HNNQ), 334–451 (ICDD…SNFQ), and 568–602 (DNNT…NDLL). Residues 334–363 (ICDDSSNSSTPSLSSYSNGNNKYNNNNNDS) show a composition bias toward low complexity. Residues 364 to 382 (SESDESDDDDNNDDDDNDS) are compositionally biased toward acidic residues. Low complexity-rich tracts occupy residues 383–451 (IDFN…SNFQ) and 568–582 (DNNT…ISVN).

The protein is Developmental gene 1062 protein (DG1062) of Dictyostelium discoideum (Social amoeba).